Consider the following 184-residue polypeptide: MENSGGIQASLSGRYATALFGLARDEKAIDAVSASLQSLKAALTESDDFRRLTTSPLVSRDEAMKAVAATAASLGIDPLTTKFLGVLAQNRRLGQLGAVIRSFGTLSARHRGETTAEVTSAHPLTATQVKALKAKLKTQLDRDVAVDLTVDPSILGGLIVKIGSRQIDGSIRSKLNSLAIAMKG.

This sequence belongs to the ATPase delta chain family. In terms of assembly, F-type ATPases have 2 components, F(1) - the catalytic core - and F(0) - the membrane proton channel. F(1) has five subunits: alpha(3), beta(3), gamma(1), delta(1), epsilon(1). F(0) has three main subunits: a(1), b(2) and c(10-14). The alpha and beta chains form an alternating ring which encloses part of the gamma chain. F(1) is attached to F(0) by a central stalk formed by the gamma and epsilon chains, while a peripheral stalk is formed by the delta and b chains.

It localises to the cell inner membrane. F(1)F(0) ATP synthase produces ATP from ADP in the presence of a proton or sodium gradient. F-type ATPases consist of two structural domains, F(1) containing the extramembraneous catalytic core and F(0) containing the membrane proton channel, linked together by a central stalk and a peripheral stalk. During catalysis, ATP synthesis in the catalytic domain of F(1) is coupled via a rotary mechanism of the central stalk subunits to proton translocation. In terms of biological role, this protein is part of the stalk that links CF(0) to CF(1). It either transmits conformational changes from CF(0) to CF(1) or is implicated in proton conduction. This Rhizorhabdus wittichii (strain DSM 6014 / CCUG 31198 / JCM 15750 / NBRC 105917 / EY 4224 / RW1) (Sphingomonas wittichii) protein is ATP synthase subunit delta.